A 422-amino-acid chain; its full sequence is Monoacylglycerol lipase ABHD2 (422 aa).

Residues 1 to 15 (MSAQLEADVRTMSPE) are Cytoplasmic-facing. Residues 16-36 (MPAMFDGMKLAAVAAVLYVIV) traverse the membrane as a helical; Signal-anchor for type II membrane protein segment. The Extracellular segment spans residues 37–422 (RSLNLKCPTA…HKPQCHQQKE (386 aa)). The region spanning 134 to 385 (MVICPGIGNH…HGGHLGFFEG (252 aa)) is the AB hydrolase-1 domain. Residue Asn142 is glycosylated (N-linked (GlcNAc...) asparagine). The active-site Nucleophile is Ser213. Residues Asn285, Asn335, and Asn344 are each glycosylated (N-linked (GlcNAc...) asparagine). Residues Asp348 and His379 each act as charge relay system in the active site.

The protein belongs to the AB hydrolase superfamily. AB hydrolase 4 family.

Its subcellular location is the cell membrane. It catalyses the reaction Hydrolyzes glycerol monoesters of long-chain fatty acids.. It carries out the reaction an acetyl ester + H2O = an aliphatic alcohol + acetate + H(+). The catalysed reaction is a triacylglycerol + H2O = a diacylglycerol + a fatty acid + H(+). The enzyme catalyses 2-(5Z,8Z,11Z,14Z-eicosatetraenoyl)-glycerol + H2O = glycerol + (5Z,8Z,11Z,14Z)-eicosatetraenoate + H(+). It catalyses the reaction a butanoate ester + H2O = an aliphatic alcohol + butanoate + H(+). It carries out the reaction hexadecanoate ester + H2O = an aliphatic alcohol + hexadecanoate + H(+). Acylglycerol lipase activity is activated upon binding to progesterone. In terms of biological role, progesterone-dependent acylglycerol lipase that catalyzes hydrolysis of endocannabinoid arachidonoylglycerol (AG) from cell membrane. Acts as a progesterone receptor: progesterone-binding activates the acylglycerol lipase activity, mediating degradation of 1-arachidonoylglycerol (1AG) and 2-arachidonoylglycerol (2AG) to glycerol and arachidonic acid (AA). Also displays an ester hydrolase activity against acetyl ester, butanoate ester and hexadecanoate ester. Plays a key role in sperm capacitation in response to progesterone by mediating degradation of 2AG, an inhibitor of the sperm calcium channel CatSper, leading to calcium influx via CatSper and sperm activation. May also play a role in smooth muscle cells migration. This chain is Monoacylglycerol lipase ABHD2 (abhd2b), found in Danio rerio (Zebrafish).